We begin with the raw amino-acid sequence, 324 residues long: BURP domain-containing protein 5 (324 aa).

The signal sequence occupies residues 1–30 (MCATLCTLLDEISILILMLLLIQLEIRVSA). A BURP domain is found at 109–323 (FFLETNLQSS…QPDVVVWTRR (215 aa)).

As to expression, expressed in panicles.

The sequence is that of BURP domain-containing protein 5 (BURP5) from Oryza sativa subsp. japonica (Rice).